We begin with the raw amino-acid sequence, 302 residues long: Probable alpha-L-glutamate ligase (302 aa).

Positions 112-294 (LQLLLKAGIP…IAAEIIDYIE (183 aa)) constitute an ATP-grasp domain. Residues lysine 148, 185–186 (DF), aspartate 194, and 218–220 (RAN) contribute to the ATP site. Residues aspartate 255, glutamate 267, and asparagine 269 each contribute to the Mg(2+) site. The Mn(2+) site is built by aspartate 255, glutamate 267, and asparagine 269.

It belongs to the RimK family. It depends on Mg(2+) as a cofactor. Mn(2+) is required as a cofactor.

This is Probable alpha-L-glutamate ligase from Haemophilus influenzae (strain ATCC 51907 / DSM 11121 / KW20 / Rd).